The following is a 314-amino-acid chain: Lipoyl synthase (314 aa).

[4Fe-4S] cluster-binding residues include Cys61, Cys66, Cys72, Cys87, Cys91, Cys94, and Ser301. One can recognise a Radical SAM core domain in the interval 73 to 290 (FGRGTATFMI…ERIATNLGFS (218 aa)).

It belongs to the radical SAM superfamily. Lipoyl synthase family. [4Fe-4S] cluster serves as cofactor.

It localises to the cytoplasm. The catalysed reaction is [[Fe-S] cluster scaffold protein carrying a second [4Fe-4S](2+) cluster] + N(6)-octanoyl-L-lysyl-[protein] + 2 oxidized [2Fe-2S]-[ferredoxin] + 2 S-adenosyl-L-methionine + 4 H(+) = [[Fe-S] cluster scaffold protein] + N(6)-[(R)-dihydrolipoyl]-L-lysyl-[protein] + 4 Fe(3+) + 2 hydrogen sulfide + 2 5'-deoxyadenosine + 2 L-methionine + 2 reduced [2Fe-2S]-[ferredoxin]. It functions in the pathway protein modification; protein lipoylation via endogenous pathway; protein N(6)-(lipoyl)lysine from octanoyl-[acyl-carrier-protein]: step 2/2. Its function is as follows. Catalyzes the radical-mediated insertion of two sulfur atoms into the C-6 and C-8 positions of the octanoyl moiety bound to the lipoyl domains of lipoate-dependent enzymes, thereby converting the octanoylated domains into lipoylated derivatives. This Nitrosomonas eutropha (strain DSM 101675 / C91 / Nm57) protein is Lipoyl synthase.